The sequence spans 140 residues: Large ribosomal subunit protein uL13 (140 aa).

This sequence belongs to the universal ribosomal protein uL13 family. As to quaternary structure, part of the 50S ribosomal subunit.

In terms of biological role, this protein is one of the early assembly proteins of the 50S ribosomal subunit, although it is not seen to bind rRNA by itself. It is important during the early stages of 50S assembly. This is Large ribosomal subunit protein uL13 from Methanosarcina mazei (strain ATCC BAA-159 / DSM 3647 / Goe1 / Go1 / JCM 11833 / OCM 88) (Methanosarcina frisia).